The sequence spans 207 residues: Ribosomal RNA large subunit methyltransferase E (207 aa).

Residues glycine 60, tryptophan 62, aspartate 80, aspartate 96, and aspartate 121 each contribute to the S-adenosyl-L-methionine site. Lysine 161 functions as the Proton acceptor in the catalytic mechanism.

Belongs to the class I-like SAM-binding methyltransferase superfamily. RNA methyltransferase RlmE family.

Its subcellular location is the cytoplasm. It catalyses the reaction uridine(2552) in 23S rRNA + S-adenosyl-L-methionine = 2'-O-methyluridine(2552) in 23S rRNA + S-adenosyl-L-homocysteine + H(+). Functionally, specifically methylates the uridine in position 2552 of 23S rRNA at the 2'-O position of the ribose in the fully assembled 50S ribosomal subunit. This is Ribosomal RNA large subunit methyltransferase E from Methylobacillus flagellatus (strain ATCC 51484 / DSM 6875 / VKM B-1610 / KT).